The chain runs to 471 residues: Ribulose bisphosphate carboxylase large chain 2 (471 aa).

Substrate contacts are provided by asparagine 116 and threonine 166. The Proton acceptor role is filled by lysine 168. Position 170 (lysine 170) interacts with substrate. Mg(2+)-binding residues include lysine 194, aspartate 196, and glutamate 197. An N6-carboxylysine modification is found at lysine 194. Histidine 287 acts as the Proton acceptor in catalysis. 3 residues coordinate substrate: arginine 288, histidine 320, and serine 372.

It belongs to the RuBisCO large chain family. Type I subfamily. Heterohexadecamer of 8 large chains and 8 small chains. Forms a CsoS2-CsoS1-RuBisCO complex. It depends on Mg(2+) as a cofactor.

The protein resides in the carboxysome. The catalysed reaction is 2 (2R)-3-phosphoglycerate + 2 H(+) = D-ribulose 1,5-bisphosphate + CO2 + H2O. It carries out the reaction D-ribulose 1,5-bisphosphate + O2 = 2-phosphoglycolate + (2R)-3-phosphoglycerate + 2 H(+). RuBisCO catalyzes two reactions: the carboxylation of D-ribulose 1,5-bisphosphate, the primary event in carbon dioxide fixation, as well as the oxidative fragmentation of the pentose substrate. Both reactions occur simultaneously and in competition at the same active site. Replacing the endogenous type I ccbLS genes in H.neapolitanus with this carboxysomally targeted enzyme reconstitutes RuBisCO with about 25% of normal activity; the active enzyme is targeted to carboxysomes. This is Ribulose bisphosphate carboxylase large chain 2 from Hydrogenovibrio crunogenus (strain DSM 25203 / XCL-2) (Thiomicrospira crunogena).